The chain runs to 231 residues: Fibrillarin-like rRNA/tRNA 2'-O-methyltransferase (231 aa).

S-adenosyl-L-methionine contacts are provided by residues 88–89 (TT), 106–107 (EF), 131–132 (DA), and 151–154 (DVAQ).

Belongs to the methyltransferase superfamily. Fibrillarin family. Interacts with nop5. Component of box C/D small ribonucleoprotein (sRNP) particles that contain rpl7ae, FlpA and nop5, plus a guide RNA.

Functionally, involved in pre-rRNA and tRNA processing. Utilizes the methyl donor S-adenosyl-L-methionine to catalyze the site-specific 2'-hydroxyl methylation of ribose moieties in rRNA and tRNA. Site specificity is provided by a guide RNA that base pairs with the substrate. Methylation occurs at a characteristic distance from the sequence involved in base pairing with the guide RNA. The protein is Fibrillarin-like rRNA/tRNA 2'-O-methyltransferase of Methanococcus aeolicus (strain ATCC BAA-1280 / DSM 17508 / OCM 812 / Nankai-3).